The sequence spans 255 residues: 5-oxoprolinase subunit A (255 aa).

The protein belongs to the LamB/PxpA family. In terms of assembly, forms a complex composed of PxpA, PxpB and PxpC.

The catalysed reaction is 5-oxo-L-proline + ATP + 2 H2O = L-glutamate + ADP + phosphate + H(+). Catalyzes the cleavage of 5-oxoproline to form L-glutamate coupled to the hydrolysis of ATP to ADP and inorganic phosphate. The sequence is that of 5-oxoprolinase subunit A from Corynebacterium efficiens (strain DSM 44549 / YS-314 / AJ 12310 / JCM 11189 / NBRC 100395).